The chain runs to 496 residues: Solute carrier family 2, facilitated glucose transporter member 3 (496 aa).

Topologically, residues 1-11 are cytoplasmic; that stretch reads MADKKKITASL. Residues 12–33 traverse the membrane as a helical segment; sequence IYAVSVAAIGSLQFGYNTGVIN. Residues 34–65 are Extracellular-facing; that stretch reads APEKIIQAFYNRTLSQRSGETISPELLTSLWS. N44 carries N-linked (GlcNAc...) asparagine glycosylation. A helical membrane pass occupies residues 66–86; the sequence is LSVAIFSVGGMIGSFSVSLFF. The Cytoplasmic portion of the chain corresponds to 87-91; the sequence is NRFGR. Residues 92 to 112 form a helical membrane-spanning segment; the sequence is RNSMLLVNVLAFAGGALMALS. Residues 113–119 lie on the Extracellular side of the membrane; the sequence is KIAKAVE. Residues 120-143 traverse the membrane as a helical segment; that stretch reads MLIIGRFIIGLFCGLCTGFVPMYI. The Cytoplasmic segment spans residues 144–154; the sequence is SEVSPTSLRGA. The helical transmembrane segment at 155–175 threads the bilayer; that stretch reads FGTLNQLGIVVGILVAQIFGL. Q160 provides a ligand contact to D-glucose. Topologically, residues 176–184 are extracellular; it reads EGIMGTEAL. Residues 185–205 form a helical membrane-spanning segment; that stretch reads WPLLLGFTIVPAVLQCVALLF. Over 206-270 the chain is Cytoplasmic; that stretch reads CPESPRFLLI…LFRSPNYRQP (65 aa). A helical membrane pass occupies residues 271–291; sequence IIISITLQLSQQLSGINAVFY. Residues 278-280 form an important for selectivity against fructose region; it reads QLS. D-glucose-binding positions include 281–282 and N287; that span reads QQ. Over 292-305 the chain is Extracellular; that stretch reads YSTGIFERAGITQP. Residues 306-326 traverse the membrane as a helical segment; sequence VYATIGAGVVNTVFTVVSLFL. Residue N316 participates in D-glucose binding. Over 327 to 332 the chain is Cytoplasmic; the sequence is VERAGR. The chain crosses the membrane as a helical span at residues 333–353; that stretch reads RTLHLVGLGGMAVCAAVMTIA. Residues 354–362 lie on the Extracellular side of the membrane; sequence LALKEKWIR. The chain crosses the membrane as a helical span at residues 363 to 388; the sequence is YISIVATFGFVALFEIGPGPIPWFIV. D-glucose-binding residues include E377 and W385. Residues 389–398 lie on the Cytoplasmic side of the membrane; it reads AELFSQGPRP. The chain crosses the membrane as a helical span at residues 399–419; it reads AAMAVAGCSNWTSNFLVGMLF. Residues 420–428 are Extracellular-facing; sequence PYAEKLCGP. A helical transmembrane segment spans residues 429–449; the sequence is YVFLIFLVFLLIFFIFTYFKV. The Cytoplasmic portion of the chain corresponds to 450–496; it reads PETKGRTFEDISRGFEEQVETSSPSSPPIEKNPMVEMNSIEPDKEVA. The segment at 464-496 is disordered; sequence FEEQVETSSPSSPPIEKNPMVEMNSIEPDKEVA.

Belongs to the major facilitator superfamily. Sugar transporter (TC 2.A.1.1) family. Glucose transporter subfamily.

It is found in the cell membrane. Its subcellular location is the perikaryon. The protein localises to the cell projection. The catalysed reaction is D-glucose(out) = D-glucose(in). The enzyme catalyses D-galactose(in) = D-galactose(out). Its activity is regulated as follows. Deoxyglucose transport is inhibited by D-glucose, D-galactose and maltose. Galactose transport is inhibited by D-glucose and maltose. Functionally, facilitative glucose transporter. Can also mediate the uptake of various other monosaccharides across the cell membrane. Mediates the uptake of glucose, 2-deoxyglucose, galactose, mannose, xylose and fucose, and probably also dehydroascorbate. Does not mediate fructose transport. Required for mesendoderm differentiation. In Gallus gallus (Chicken), this protein is Solute carrier family 2, facilitated glucose transporter member 3.